A 335-amino-acid chain; its full sequence is Tetraacyldisaccharide 4'-kinase (335 aa).

Position 58-65 (58-65) interacts with ATP; it reads TVGGSGKT.

This sequence belongs to the LpxK family.

It carries out the reaction a lipid A disaccharide + ATP = a lipid IVA + ADP + H(+). It participates in glycolipid biosynthesis; lipid IV(A) biosynthesis; lipid IV(A) from (3R)-3-hydroxytetradecanoyl-[acyl-carrier-protein] and UDP-N-acetyl-alpha-D-glucosamine: step 6/6. In terms of biological role, transfers the gamma-phosphate of ATP to the 4'-position of a tetraacyldisaccharide 1-phosphate intermediate (termed DS-1-P) to form tetraacyldisaccharide 1,4'-bis-phosphate (lipid IVA). The sequence is that of Tetraacyldisaccharide 4'-kinase from Shewanella sp. (strain MR-7).